Here is a 709-residue protein sequence, read N- to C-terminus: Protein IMPAIRED IN BABA-INDUCED STERILITY 1 (709 aa).

Gly-2 carries N-myristoyl glycine lipidation. Residues 53–80 (SGKKSSSKKSGSELGSDFGELSESGRAS) form a disordered region. Residues 131-418 (FEKLEKIGQG…ASTALVSQYF (288 aa)) form the Protein kinase domain. ATP is bound by residues 137-145 (IGQGTYSSV) and Lys-160. Residue Asp-255 is the Proton acceptor of the active site. 2 disordered regions span residues 434-536 (SPSK…PFSG) and 566-609 (SRGH…QDRE). Over residues 437-449 (KEIDAKHREDTTR) the composition is skewed to basic and acidic residues. The span at 484 to 494 (HSQKFQKRNGH) shows a compositional bias: basic residues. The span at 495–505 (SVHNSIDSDST) shows a compositional bias: polar residues. 2 stretches are compositionally biased toward basic and acidic residues: residues 509–523 (KMQK…EASH) and 586–609 (VDSK…QDRE).

This sequence belongs to the protein kinase superfamily. Ser/Thr protein kinase family.

Required for beta-aminobutyric acid (BABA)-induced resistance (BABA-IR) against bacteria (e.g. P.syringae) and oomycetes (e.g. H.parasitica) via priming for salicylate (SA)-dependent defense responses such as pathogenesis-related PR-1 gene expression and trailing necrosis. Involved in BABA-mediated sterility. Necessary for the inheritance of BABA-priming to next generation, especially for the primed to be primed phenotype which consists in an enhanced second BABA-priming in transgenerationally primed plants. The protein is Protein IMPAIRED IN BABA-INDUCED STERILITY 1 of Arabidopsis thaliana (Mouse-ear cress).